The sequence spans 121 residues: Large ribosomal subunit protein uL18 (121 aa).

The protein belongs to the universal ribosomal protein uL18 family. In terms of assembly, part of the 50S ribosomal subunit; part of the 5S rRNA/L5/L18/L25 subcomplex. Contacts the 5S and 23S rRNAs.

Functionally, this is one of the proteins that bind and probably mediate the attachment of the 5S RNA into the large ribosomal subunit, where it forms part of the central protuberance. The polypeptide is Large ribosomal subunit protein uL18 (Bordetella avium (strain 197N)).